A 719-amino-acid polypeptide reads, in one-letter code: DNA ligase (719 aa).

Residues 42–46, 92–93, and Glu-126 contribute to the NAD(+) site; these read DAAYD and SL. Lys-128 functions as the N6-AMP-lysine intermediate in the catalytic mechanism. 4 residues coordinate NAD(+): Arg-149, Glu-185, Lys-301, and Lys-325. Residues Cys-430, Cys-433, Cys-448, and Cys-454 each contribute to the Zn(2+) site. The BRCT domain occupies 640 to 719; it reads ATGSPVEGKT…DDWFKLVGED (80 aa).

The protein belongs to the NAD-dependent DNA ligase family. LigA subfamily. Requires Mg(2+) as cofactor. Mn(2+) is required as a cofactor.

It carries out the reaction NAD(+) + (deoxyribonucleotide)n-3'-hydroxyl + 5'-phospho-(deoxyribonucleotide)m = (deoxyribonucleotide)n+m + AMP + beta-nicotinamide D-nucleotide.. Its function is as follows. DNA ligase that catalyzes the formation of phosphodiester linkages between 5'-phosphoryl and 3'-hydroxyl groups in double-stranded DNA using NAD as a coenzyme and as the energy source for the reaction. It is essential for DNA replication and repair of damaged DNA. The protein is DNA ligase of Brucella melitensis biotype 2 (strain ATCC 23457).